The chain runs to 452 residues: GATA-binding factor 2 (452 aa).

The disordered stretch occupies residues 130 to 182; sequence GGSLYPGTGSSACPSSSHSSPHLFGFPPTPPKDVSPDPGPASPPSSSRLEDKD. A compositionally biased stretch (low complexity) spans 139–151; it reads SSACPSSSHSSPH. Residues 156 to 172 show a composition bias toward pro residues; the sequence is PPTPPKDVSPDPGPASP. 2 consecutive GATA-type zinc fingers follow at residues 267–291 and 321–345; these read CVNC…CNAC and CANC…CNAC. Residues 426–438 are compositionally biased toward polar residues; sequence QTPTPIHPSSSLS. A disordered region spans residues 426 to 452; the sequence is QTPTPIHPSSSLSFGHPHHSSMVTAMG.

As to expression, expressed in the developing ventral blood island, and in the embryonic nervous system.

The protein resides in the nucleus. The polypeptide is GATA-binding factor 2 (gata2) (Xenopus laevis (African clawed frog)).